Here is a 484-residue protein sequence, read N- to C-terminus: Glutamyl-tRNA(Gln) amidotransferase subunit A (484 aa).

Residues lysine 77 and serine 152 each act as charge relay system in the active site. Serine 176 serves as the catalytic Acyl-ester intermediate.

Belongs to the amidase family. GatA subfamily. As to quaternary structure, heterotrimer of A, B and C subunits.

The enzyme catalyses L-glutamyl-tRNA(Gln) + L-glutamine + ATP + H2O = L-glutaminyl-tRNA(Gln) + L-glutamate + ADP + phosphate + H(+). Functionally, allows the formation of correctly charged Gln-tRNA(Gln) through the transamidation of misacylated Glu-tRNA(Gln) in organisms which lack glutaminyl-tRNA synthetase. The reaction takes place in the presence of glutamine and ATP through an activated gamma-phospho-Glu-tRNA(Gln). The sequence is that of Glutamyl-tRNA(Gln) amidotransferase subunit A from Lacticaseibacillus casei (strain BL23) (Lactobacillus casei).